An 82-amino-acid chain; its full sequence is Small ribosomal subunit protein uS17 (82 aa).

It belongs to the universal ribosomal protein uS17 family. In terms of assembly, part of the 30S ribosomal subunit.

Its function is as follows. One of the primary rRNA binding proteins, it binds specifically to the 5'-end of 16S ribosomal RNA. The polypeptide is Small ribosomal subunit protein uS17 (Shewanella amazonensis (strain ATCC BAA-1098 / SB2B)).